Consider the following 203-residue polypeptide: FMN-dependent NADH:quinone oxidoreductase (203 aa).

FMN contacts are provided by residues Ser9 and Ser15–Ser17.

Belongs to the azoreductase type 1 family. In terms of assembly, homodimer. Requires FMN as cofactor.

The enzyme catalyses 2 a quinone + NADH + H(+) = 2 a 1,4-benzosemiquinone + NAD(+). The catalysed reaction is N,N-dimethyl-1,4-phenylenediamine + anthranilate + 2 NAD(+) = 2-(4-dimethylaminophenyl)diazenylbenzoate + 2 NADH + 2 H(+). Its function is as follows. Quinone reductase that provides resistance to thiol-specific stress caused by electrophilic quinones. Functionally, also exhibits azoreductase activity. Catalyzes the reductive cleavage of the azo bond in aromatic azo compounds to the corresponding amines. The protein is FMN-dependent NADH:quinone oxidoreductase of Bordetella avium (strain 197N).